Here is a 532-residue protein sequence, read N- to C-terminus: Invertase 2 (532 aa).

A signal peptide spans 1–19 (MLLQAFLFLLAGFAAKISA). N-linked (GlcNAc...) asparagine glycosylation is present at Asn-23. Residues 39–42 (WMND) and Gln-60 contribute to the substrate site. Asp-42 is an active-site residue. An N-linked (GlcNAc...) asparagine; partial glycan is attached at Asn-64. An N-linked (GlcNAc...) asparagine glycan is attached at Asn-97. Residue 102–103 (FS) participates in substrate binding. Asn-111 and Asn-118 each carry an N-linked (GlcNAc...) asparagine glycan. N-linked (GlcNAc...) asparagine; partial glycosylation is present at Asn-165. Substrate is bound by residues 170–171 (RD) and Glu-223. 2 N-linked (GlcNAc...) asparagine; partial glycosylation sites follow: Asn-266 and Asn-275. Trp-311 is a substrate binding site. Residues Asn-356, Asn-369, Asn-384, and Asn-398 are each glycosylated (N-linked (GlcNAc...) asparagine). The N-linked (GlcNAc...) asparagine; partial glycan is linked to Asn-512.

This sequence belongs to the glycosyl hydrolase 32 family. Post-translationally, isoform Secreted is glycosylated. Isoform Intracellular is not glycosylated.

It is found in the cytoplasm. It localises to the secreted. The catalysed reaction is Hydrolysis of terminal non-reducing beta-D-fructofuranoside residues in beta-D-fructofuranosides.. This chain is Invertase 2 (SUC2), found in Saccharomyces cerevisiae (strain ATCC 204508 / S288c) (Baker's yeast).